The following is a 439-amino-acid chain: DNA damage-inducible protein 1 (439 aa).

Positions 1-82 (MQITIAIQDT…LALHVRETQR (82 aa)) constitute a Ubiquitin-like domain. The tract at residues 82 to 101 (RATAVPESQQGRPAAPPQQD) is disordered. Residue Asp220 is part of the active site. The interval 333-398 (QDEPTIEGPG…PAPRAPQARS (66 aa)) is disordered. Composition is skewed to low complexity over residues 364 to 375 (GQAGPSTAAQPG) and 383 to 398 (PASASAPAPRAPQARS). Residues 398–438 (SFPREHIEQLVALGADEQKAIRALEATDGNVEYAASLIFEG) enclose the UBA domain.

It belongs to the DDI1 family. In terms of assembly, binds ubiquitin and polyubiquitinated proteins.

It is found in the cytoplasm. Functionally, probable aspartic protease. May be involved in the regulation of exocytosis. Acts as a linker between the 19S proteasome and polyubiquitinated proteins via UBA domain interactions with ubiquitin for their subsequent degradation. Required for S-phase checkpoint control. The polypeptide is DNA damage-inducible protein 1 (ddi-1) (Neurospora crassa (strain ATCC 24698 / 74-OR23-1A / CBS 708.71 / DSM 1257 / FGSC 987)).